We begin with the raw amino-acid sequence, 213 residues long: Ribulose-phosphate 3-epimerase (213 aa).

Ser9 is a binding site for substrate. A divalent metal cation contacts are provided by His34, Asp36, and His66. Catalysis depends on Asp36, which acts as the Proton acceptor. Residues His66, 139–142 (GFGG), 166–168 (DGG), and 186–187 (GS) contribute to the substrate site. Asp166 contacts a divalent metal cation. The active-site Proton donor is the Asp166.

This sequence belongs to the ribulose-phosphate 3-epimerase family. Co(2+) serves as cofactor. Fe(2+) is required as a cofactor. Requires Mn(2+) as cofactor. It depends on Zn(2+) as a cofactor.

It catalyses the reaction D-ribulose 5-phosphate = D-xylulose 5-phosphate. It functions in the pathway carbohydrate degradation; pentose phosphate pathway; D-xylulose 5-phosphate from D-ribulose 5-phosphate (non-oxidative stage): step 1/1. In terms of biological role, catalyzes the reversible epimerization of D-ribulose 5-phosphate to D-xylulose 5-phosphate. In Encephalitozoon cuniculi (strain GB-M1) (Microsporidian parasite), this protein is Ribulose-phosphate 3-epimerase (RPE1).